Here is a 304-residue protein sequence, read N- to C-terminus: Aspartate carbamoyltransferase catalytic subunit (304 aa).

Arg57 and Thr58 together coordinate carbamoyl phosphate. L-aspartate is bound at residue Lys86. The carbamoyl phosphate site is built by Arg107, His135, and Gln138. L-aspartate is bound by residues Arg168 and Arg229. Leu266 and Pro267 together coordinate carbamoyl phosphate.

Belongs to the aspartate/ornithine carbamoyltransferase superfamily. ATCase family. As to quaternary structure, heterooligomer of catalytic and regulatory chains.

The catalysed reaction is carbamoyl phosphate + L-aspartate = N-carbamoyl-L-aspartate + phosphate + H(+). Its pathway is pyrimidine metabolism; UMP biosynthesis via de novo pathway; (S)-dihydroorotate from bicarbonate: step 2/3. Its function is as follows. Catalyzes the condensation of carbamoyl phosphate and aspartate to form carbamoyl aspartate and inorganic phosphate, the committed step in the de novo pyrimidine nucleotide biosynthesis pathway. This chain is Aspartate carbamoyltransferase catalytic subunit, found in Methanosphaera stadtmanae (strain ATCC 43021 / DSM 3091 / JCM 11832 / MCB-3).